A 248-amino-acid chain; its full sequence is Ubiquinone/menaquinone biosynthesis C-methyltransferase UbiE (248 aa).

S-adenosyl-L-methionine-binding residues include Ser68 and Asp92.

Belongs to the class I-like SAM-binding methyltransferase superfamily. MenG/UbiE family.

It carries out the reaction a 2-demethylmenaquinol + S-adenosyl-L-methionine = a menaquinol + S-adenosyl-L-homocysteine + H(+). The catalysed reaction is a 2-methoxy-6-(all-trans-polyprenyl)benzene-1,4-diol + S-adenosyl-L-methionine = a 5-methoxy-2-methyl-3-(all-trans-polyprenyl)benzene-1,4-diol + S-adenosyl-L-homocysteine + H(+). The protein operates within quinol/quinone metabolism; menaquinone biosynthesis; menaquinol from 1,4-dihydroxy-2-naphthoate: step 2/2. Its pathway is cofactor biosynthesis; ubiquinone biosynthesis. Methyltransferase required for the conversion of demethylmenaquinol (DMKH2) to menaquinol (MKH2) and the conversion of 2-polyprenyl-6-methoxy-1,4-benzoquinol (DDMQH2) to 2-polyprenyl-3-methyl-6-methoxy-1,4-benzoquinol (DMQH2). This chain is Ubiquinone/menaquinone biosynthesis C-methyltransferase UbiE, found in Rickettsia peacockii (strain Rustic).